A 192-amino-acid polypeptide reads, in one-letter code: dTTP/UTP pyrophosphatase (192 aa).

The active-site Proton acceptor is the D70.

This sequence belongs to the Maf family. YhdE subfamily. Requires a divalent metal cation as cofactor.

The protein localises to the cytoplasm. The enzyme catalyses dTTP + H2O = dTMP + diphosphate + H(+). It catalyses the reaction UTP + H2O = UMP + diphosphate + H(+). Its function is as follows. Nucleoside triphosphate pyrophosphatase that hydrolyzes dTTP and UTP. May have a dual role in cell division arrest and in preventing the incorporation of modified nucleotides into cellular nucleic acids. The protein is dTTP/UTP pyrophosphatase of Alkaliphilus metalliredigens (strain QYMF).